Here is a 429-residue protein sequence, read N- to C-terminus: Adenylosuccinate synthetase (429 aa).

Residues 12-18 (GDEGKGK) and 40-42 (GHT) each bind GTP. The Proton acceptor role is filled by aspartate 13. Mg(2+) contacts are provided by aspartate 13 and glycine 40. IMP-binding positions include 13-16 (DEGK), 38-41 (NAGH), threonine 129, arginine 143, glutamine 223, threonine 238, and arginine 302. Histidine 41 functions as the Proton donor in the catalytic mechanism. 298–304 (TVTGRPR) is a binding site for substrate. GTP-binding positions include arginine 304, 330 to 332 (KLD), and 412 to 414 (STS).

This sequence belongs to the adenylosuccinate synthetase family. As to quaternary structure, homodimer. The cofactor is Mg(2+).

The protein localises to the cytoplasm. It catalyses the reaction IMP + L-aspartate + GTP = N(6)-(1,2-dicarboxyethyl)-AMP + GDP + phosphate + 2 H(+). Its pathway is purine metabolism; AMP biosynthesis via de novo pathway; AMP from IMP: step 1/2. Functionally, plays an important role in the de novo pathway of purine nucleotide biosynthesis. Catalyzes the first committed step in the biosynthesis of AMP from IMP. The chain is Adenylosuccinate synthetase from Rhodospirillum rubrum (strain ATCC 11170 / ATH 1.1.1 / DSM 467 / LMG 4362 / NCIMB 8255 / S1).